A 465-amino-acid polypeptide reads, in one-letter code: Poly(A) polymerase I (465 aa).

Catalysis depends on residues Asp80, Asp82, and Asp162. Residues 430–465 (APPEQKGMLNELDDDPAPRRRRSRPRKRAPRREGTV) are disordered. Over residues 448–459 (RRRRSRPRKRAP) the composition is skewed to basic residues.

This sequence belongs to the tRNA nucleotidyltransferase/poly(A) polymerase family.

The catalysed reaction is RNA(n) + ATP = RNA(n)-3'-adenine ribonucleotide + diphosphate. In terms of biological role, adds poly(A) tail to the 3' end of many RNAs, which usually targets these RNAs for decay. Plays a significant role in the global control of gene expression, through influencing the rate of transcript degradation, and in the general RNA quality control. This Salmonella typhimurium (strain LT2 / SGSC1412 / ATCC 700720) protein is Poly(A) polymerase I.